The following is a 429-amino-acid chain: MKERTIQPVNNGLNGNITIPGDKSISHRAVMFGAIAEGKTTIKGFLPGADCLSTISCFKEMGVDIVQNGDEVTVVGKGLEGLQEPKAILDVGNSGTTIRLMSGILANTPFFSCVQGDASIAKRPMKRVTNPLKQMGANIDGREEGTFTPLTIRGGDLKAIEYTSPVASAQVKSAILLAGLRAEGVTAVTEPHISRDHTERMLEAFGVKVTREGKTVKLAGGQKLTATDVQVPGDVSSAAFFLVAGAIIPNSKLVLQNVGMNPTRTGIIDVLEKMGATFTVEPINEGASEPAANITIETTSLKGIEIGGDIIPRLIDEIPVIALAATQAEGITVIKDAHELKVKETNRIDTVVAELTKLGARIEATDDGMIIYGKSALKGNTVNSYGDHRIGMMLAIAGCLAEGKTTIEDAEAVGVSYPTFFEELQRLTK.

3 residues coordinate 3-phosphoshikimate: K23, S24, and R28. Phosphoenolpyruvate is bound at residue K23. Phosphoenolpyruvate contacts are provided by G95 and R123. 3-phosphoshikimate-binding residues include S168, Q170, D316, and K343. Phosphoenolpyruvate is bound at residue Q170. Residue D316 is the Proton acceptor of the active site. Residues R347 and R389 each coordinate phosphoenolpyruvate.

The protein belongs to the EPSP synthase family. In terms of assembly, monomer.

The protein localises to the cytoplasm. The enzyme catalyses 3-phosphoshikimate + phosphoenolpyruvate = 5-O-(1-carboxyvinyl)-3-phosphoshikimate + phosphate. Its pathway is metabolic intermediate biosynthesis; chorismate biosynthesis; chorismate from D-erythrose 4-phosphate and phosphoenolpyruvate: step 6/7. Catalyzes the transfer of the enolpyruvyl moiety of phosphoenolpyruvate (PEP) to the 5-hydroxyl of shikimate-3-phosphate (S3P) to produce enolpyruvyl shikimate-3-phosphate and inorganic phosphate. This Bacillus cereus (strain 03BB102) protein is 3-phosphoshikimate 1-carboxyvinyltransferase.